We begin with the raw amino-acid sequence, 408 residues long: Imidazolonepropionase (408 aa).

Fe(3+) is bound by residues H73 and H75. Residues H73 and H75 each coordinate Zn(2+). The 4-imidazolone-5-propanoate site is built by R82, Y145, and H178. Position 145 (Y145) interacts with N-formimidoyl-L-glutamate. H243 contacts Fe(3+). H243 is a Zn(2+) binding site. Q246 serves as a coordination point for 4-imidazolone-5-propanoate. Position 318 (D318) interacts with Fe(3+). D318 is a Zn(2+) binding site. The N-formimidoyl-L-glutamate site is built by N320 and G322. S323 is a 4-imidazolone-5-propanoate binding site.

This sequence belongs to the metallo-dependent hydrolases superfamily. HutI family. Zn(2+) serves as cofactor. The cofactor is Fe(3+).

It localises to the cytoplasm. The enzyme catalyses 4-imidazolone-5-propanoate + H2O = N-formimidoyl-L-glutamate. Its pathway is amino-acid degradation; L-histidine degradation into L-glutamate; N-formimidoyl-L-glutamate from L-histidine: step 3/3. In terms of biological role, catalyzes the hydrolytic cleavage of the carbon-nitrogen bond in imidazolone-5-propanoate to yield N-formimidoyl-L-glutamate. It is the third step in the universal histidine degradation pathway. This is Imidazolonepropionase from Shewanella sediminis (strain HAW-EB3).